Here is a 451-residue protein sequence, read N- to C-terminus: Molybdate-anion transporter (451 aa).

Helical transmembrane passes span 1–21 (MLVT…VLEF), 45–65 (YDFY…GPYL), 79–99 (IAII…VSVP), 130–150 (FVLM…FSCF), 180–200 (NGGI…WLGL), 201–221 (GPAS…VLVI), 251–271 (VLLL…FIFL), 281–301 (APLG…SSLY), 316–336 (VLCL…FSTA), 346–366 (LLAF…MRFL), 378–398 (GVLN…LLVL), and 410–430 (MFSL…SLFT).

It belongs to the major facilitator superfamily.

The protein resides in the cell membrane. Functionally, mediates high-affinity intracellular uptake of the rare oligo-element molybdenum. The sequence is that of Molybdate-anion transporter (mfsd5) from Xenopus laevis (African clawed frog).